Reading from the N-terminus, the 353-residue chain is Photosystem II protein D1 (353 aa).

Threonine 2 carries the N-acetylthreonine modification. Position 2 is a phosphothreonine (threonine 2). A run of 3 helical transmembrane segments spans residues 29–46 (YIGWFGVLMIPTLLTATS), 118–133 (HFLLGVACYMGREWEL), and 142–156 (WIVVAYSAPVAAATA). Residue histidine 118 participates in chlorophyll a binding. Position 126 (tyrosine 126) interacts with pheophytin a. 2 residues coordinate [CaMn4O5] cluster: aspartate 170 and glutamate 189. Residues 197–218 (FHMLGVAGVFGGSLFSAMHGSL) form a helical membrane-spanning segment. Histidine 198 is a chlorophyll a binding site. Residues histidine 215 and 264 to 265 (SF) contribute to the a quinone site. Residue histidine 215 participates in Fe cation binding. A Fe cation-binding site is contributed by histidine 272. The chain crosses the membrane as a helical span at residues 274–288 (FLAAWPVVGIWFTAL). 4 residues coordinate [CaMn4O5] cluster: histidine 332, glutamate 333, aspartate 342, and alanine 344. A propeptide spanning residues 345-353 (AVDAPSISG) is cleaved from the precursor.

This sequence belongs to the reaction center PufL/M/PsbA/D family. PSII is composed of 1 copy each of membrane proteins PsbA, PsbB, PsbC, PsbD, PsbE, PsbF, PsbH, PsbI, PsbJ, PsbK, PsbL, PsbM, PsbT, PsbX, PsbY, PsbZ, Psb30/Ycf12, at least 3 peripheral proteins of the oxygen-evolving complex and a large number of cofactors. It forms dimeric complexes. The cofactor is The D1/D2 heterodimer binds P680, chlorophylls that are the primary electron donor of PSII, and subsequent electron acceptors. It shares a non-heme iron and each subunit binds pheophytin, quinone, additional chlorophylls, carotenoids and lipids. D1 provides most of the ligands for the Mn4-Ca-O5 cluster of the oxygen-evolving complex (OEC). There is also a Cl(-1) ion associated with D1 and D2, which is required for oxygen evolution. The PSII complex binds additional chlorophylls, carotenoids and specific lipids.. Tyr-161 forms a radical intermediate that is referred to as redox-active TyrZ, YZ or Y-Z. Post-translationally, C-terminally processed by CTPA; processing is essential to allow assembly of the oxygen-evolving complex and thus photosynthetic growth.

It localises to the plastid. It is found in the chloroplast thylakoid membrane. The enzyme catalyses 2 a plastoquinone + 4 hnu + 2 H2O = 2 a plastoquinol + O2. In terms of biological role, photosystem II (PSII) is a light-driven water:plastoquinone oxidoreductase that uses light energy to abstract electrons from H(2)O, generating O(2) and a proton gradient subsequently used for ATP formation. It consists of a core antenna complex that captures photons, and an electron transfer chain that converts photonic excitation into a charge separation. The D1/D2 (PsbA/PsbD) reaction center heterodimer binds P680, the primary electron donor of PSII as well as several subsequent electron acceptors. The sequence is that of Photosystem II protein D1 from Vicia faba (Broad bean).